Reading from the N-terminus, the 1057-residue chain is Self-sufficient cytochrome P450 monooxygenase CYP505E3 (1057 aa).

Cys-403 contributes to the heme binding site. The disordered stretch occupies residues 465 to 488; the sequence is PSAAPFSSHARETTNASLPASPGT. Positions 494–634 constitute a Flavodoxin-like domain; that stretch reads MYVLYGSNTG…AFEAWETKLW (141 aa). FMN contacts are provided by residues 500-504 and 578-610; these read SNTGT and VFGC…QRLV. Residues 671–900 enclose the FAD-binding FR-type domain; that stretch reads HDAALGTVIE…RASNAAFHLP (230 aa).

In the N-terminal section; belongs to the cytochrome P450 family. It depends on FAD as a cofactor. FMN is required as a cofactor. Requires heme as cofactor.

The catalysed reaction is 2 oxidized [cytochrome P450] + NADPH = 2 reduced [cytochrome P450] + NADP(+) + H(+). It catalyses the reaction an organic molecule + reduced [NADPH--hemoprotein reductase] + O2 = an alcohol + oxidized [NADPH--hemoprotein reductase] + H2O + H(+). It carries out the reaction dodecan-1-ol + reduced [NADPH--hemoprotein reductase] + O2 = 1,5-dodecanediol + oxidized [NADPH--hemoprotein reductase] + H2O + H(+). The enzyme catalyses dodecan-1-ol + reduced [NADPH--hemoprotein reductase] + O2 = 1,6-dodecanediol + oxidized [NADPH--hemoprotein reductase] + H2O + H(+). Self-sufficient cytochrome P450 monooxygenase that catalyzes the regioselective in-chain hydroxylation of fatty alcohols (C9-15) as well as fatty acids (C9-15) at the omega-1 to omega-7 or omega-1 to omega-6 positions, respectively. Is also able to convert naphthalene to 1-naphthol and 1-naphthol further to 1,3-dihydroxynaphthalene. The polypeptide is Self-sufficient cytochrome P450 monooxygenase CYP505E3 (Phanerodontia chrysosporium (White-rot fungus)).